An 813-amino-acid chain; its full sequence is G-type lectin S-receptor-like serine/threonine-protein kinase LECRK1 (813 aa).

An N-terminal signal peptide occupies residues 1–19 (MVALLLFPMLLQLLSPTCA). The Extracellular portion of the chain corresponds to 20–466 (QTQKNITLGS…NRKHWVLGSS (447 aa)). Positions 22 to 149 (QKNITLGSTL…DGTTKWQTFD (128 aa)) constitute a Bulb-type lectin domain. 6 N-linked (GlcNAc...) asparagine glycosylation sites follow: N24, N57, N164, N168, N219, and N242. Positions 293–346 (PQNICHAIVSDVGSGVCGFNSYCTFDGTRNQIASCQCPPWYKFFDEQKKYKGCK) constitute an EGF-like; atypical domain. Cystine bridges form between C297–C315, C309–C327, C329–C345, C391–C413, and C395–C401. The 80-residue stretch at 354-433 (CDLEEATALA…NMADYVQRTV (80 aa)) folds into the PAN domain. N-linked (GlcNAc...) asparagine glycans are attached at residues N407 and N441. The helical transmembrane segment at 467–487 (LILGTSILVNFALISIFLFGT) threads the bilayer. Topologically, residues 488-813 (YCRITTKKNI…DPCSFISSLP (326 aa)) are cytoplasmic. Residues 523-797 (AGFHEILGAG…KVTQMLDGAV (275 aa)) form the Protein kinase domain. Residues 529 to 537 (LGAGASGVV) and K553 contribute to the ATP site. D647 serves as the catalytic Proton acceptor.

This sequence belongs to the protein kinase superfamily. Ser/Thr protein kinase family. In terms of assembly, interacts (via kinase domain) with ADF4. In terms of tissue distribution, expressed in plumules, radicles and panicles.

It localises to the membrane. It carries out the reaction L-seryl-[protein] + ATP = O-phospho-L-seryl-[protein] + ADP + H(+). The enzyme catalyses L-threonyl-[protein] + ATP = O-phospho-L-threonyl-[protein] + ADP + H(+). In terms of biological role, involved in innate immunity. Required for the expression of defense-related genes PR1A, LOX2 and CHS1 upon biotic stresses. Required for basal resistance to the fungal blast (M.grisea), bacterial blight (O.oryzae pv. oryzae, Xoo) and the herbivorous insect brown planthopper (N.lugens, BPH). May be involved in several defense signaling pathways. Involved in the promotion of seed germination. Required for the expression of alpha-amylase genes during seed germination. Involved in resistance against the brown planthopper (BPH). Member of the BPH3 (BPH resistance locus 3) cluster which contains LECRK1, LECRK2 and LECRK3. The sequence is that of G-type lectin S-receptor-like serine/threonine-protein kinase LECRK1 from Oryza sativa subsp. indica (Rice).